The chain runs to 180 residues: ATP-dependent protease subunit HslV (180 aa).

T5 is a catalytic residue. Na(+) is bound by residues G161, C164, and T167.

This sequence belongs to the peptidase T1B family. HslV subfamily. A double ring-shaped homohexamer of HslV is capped on each side by a ring-shaped HslU homohexamer. The assembly of the HslU/HslV complex is dependent on binding of ATP.

Its subcellular location is the cytoplasm. The enzyme catalyses ATP-dependent cleavage of peptide bonds with broad specificity.. With respect to regulation, allosterically activated by HslU binding. Functionally, protease subunit of a proteasome-like degradation complex believed to be a general protein degrading machinery. This chain is ATP-dependent protease subunit HslV, found in Campylobacter jejuni subsp. jejuni serotype O:6 (strain 81116 / NCTC 11828).